Consider the following 282-residue polypeptide: 2-dehydro-3-deoxyphosphooctonate aldolase (282 aa).

It belongs to the KdsA family.

It is found in the cytoplasm. The catalysed reaction is D-arabinose 5-phosphate + phosphoenolpyruvate + H2O = 3-deoxy-alpha-D-manno-2-octulosonate-8-phosphate + phosphate. It functions in the pathway carbohydrate biosynthesis; 3-deoxy-D-manno-octulosonate biosynthesis; 3-deoxy-D-manno-octulosonate from D-ribulose 5-phosphate: step 2/3. Its pathway is bacterial outer membrane biogenesis; lipopolysaccharide biosynthesis. This Chromobacterium violaceum (strain ATCC 12472 / DSM 30191 / JCM 1249 / CCUG 213 / NBRC 12614 / NCIMB 9131 / NCTC 9757 / MK) protein is 2-dehydro-3-deoxyphosphooctonate aldolase.